The sequence spans 291 residues: Tumor necrosis factor ligand superfamily member 10 (291 aa).

The Cytoplasmic segment spans residues 1–17 (MPSSGALKDLSFSQHFR). The chain crosses the membrane as a helical; Signal-anchor for type II membrane protein span at residues 18 to 38 (MMVICIVLLQVLLQAVSVAVT). Topologically, residues 39–291 (YMYFTNEMKQ…ASFFGAFLIN (253 aa)) are extracellular. N-linked (GlcNAc...) asparagine glycosylation occurs at Asn52. One can recognise a THD domain in the interval 126-290 (VAAHITGITR…EASFFGAFLI (165 aa)). Position 240 (Cys240) interacts with Zn(2+).

It belongs to the tumor necrosis factor family. In terms of assembly, homotrimer. One TNFSF10 homotrimer interacts with three TNFSF10A mononers. One TNFSF10 homotrimer interacts with three TNFSF10B mononers. Tyrosine phosphorylated by PKDCC/VLK. Widespread.

It is found in the cell membrane. The protein resides in the secreted. In terms of biological role, cytokine that binds to TNFRSF10A/TRAILR1, TNFRSF10B/TRAILR2, TNFRSF10C/TRAILR3, TNFRSF10D/TRAILR4 and possibly also to TNFRSF11B/OPG. Induces apoptosis. Its activity may be modulated by binding to the decoy receptors TNFRSF10C/TRAILR3, TNFRSF10D/TRAILR4 and TNFRSF11B/OPG that cannot induce apoptosis. The chain is Tumor necrosis factor ligand superfamily member 10 (Tnfsf10) from Mus musculus (Mouse).